We begin with the raw amino-acid sequence, 352 residues long: Glycerol-1-phosphate dehydrogenase [NAD(P)+] (352 aa).

NAD(+) is bound by residues 99-103 (GAKID) and 121-124 (TAPS). Aspartate 126 provides a ligand contact to substrate. Serine 130 is an NAD(+) binding site. Residue aspartate 173 participates in substrate binding. 2 residues coordinate Zn(2+): aspartate 173 and histidine 253. Position 257 (histidine 257) interacts with substrate. Histidine 269 lines the Zn(2+) pocket.

This sequence belongs to the glycerol-1-phosphate dehydrogenase family. Zn(2+) serves as cofactor.

It localises to the cytoplasm. It catalyses the reaction sn-glycerol 1-phosphate + NAD(+) = dihydroxyacetone phosphate + NADH + H(+). It carries out the reaction sn-glycerol 1-phosphate + NADP(+) = dihydroxyacetone phosphate + NADPH + H(+). Its pathway is membrane lipid metabolism; glycerophospholipid metabolism. Functionally, catalyzes the NAD(P)H-dependent reduction of dihydroxyacetonephosphate (DHAP or glycerone phosphate) to glycerol 1-phosphate (G1P). The G1P thus generated is used as the glycerophosphate backbone of phospholipids in the cellular membranes of Archaea. This Thermoplasma acidophilum (strain ATCC 25905 / DSM 1728 / JCM 9062 / NBRC 15155 / AMRC-C165) protein is Glycerol-1-phosphate dehydrogenase [NAD(P)+].